A 762-amino-acid chain; its full sequence is Serine/threonine-protein kinase PLK4 (762 aa).

The Protein kinase domain maps to 14-268 (YEVQHLLGKG…LEQVLRHPFM (255 aa)). ATP is bound by residues 20–28 (LGKGGFACV) and Lys-43. Residue Asp-139 is the Proton acceptor of the active site. A Cryptic POLO box 1 (CPB1) domain is found at 383–498 (AECISMPPLN…ARFVSLVKSK (116 aa)). Residues 499–602 (TPKVTYFSGL…GRRPTPEVMP (104 aa)) enclose the Cryptic POLO box 2 (CPB2) domain. The region spanning 657–736 (PIKRLNVPGV…LPQVQMKLKS (80 aa)) is the POLO box domain.

It belongs to the protein kinase superfamily. Ser/Thr protein kinase family. CDC5/Polo subfamily. In terms of assembly, homodimer. Post-translationally, ubiquitinated by the SCF(Slimb) ubiquitin ligase complex; leading to its degradation by the proteasome during interphase and regulating centriole number and ensuring the block to centriole reduplication.

It localises to the cytoplasm. Its subcellular location is the cytoskeleton. The protein resides in the microtubule organizing center. It is found in the centrosome. The protein localises to the centriole. The enzyme catalyses L-seryl-[protein] + ATP = O-phospho-L-seryl-[protein] + ADP + H(+). It carries out the reaction L-threonyl-[protein] + ATP = O-phospho-L-threonyl-[protein] + ADP + H(+). In terms of biological role, serine/threonine-protein kinase that plays a central role in centriole duplication. Able to trigger procentriole formation on the surface of the mother centriole cylinder, using mother centriole as a platform, leading to the recruitment of centriole biogenesis proteins such as sas-6. When overexpressed, it is able to induce centrosome amplification through the simultaneous generation of multiple procentrioles adjoining each parental centriole during S phase. Centrosome amplification following overexpression can initiate tumorigenesis, highlighting the importance of centrosome regulation in cancers. This chain is Serine/threonine-protein kinase PLK4 (SAK), found in Drosophila grimshawi (Hawaiian fruit fly).